Reading from the N-terminus, the 368-residue chain is 1-deoxy-D-xylulose 5-phosphate reductoisomerase (368 aa).

Positions 7, 8, 9, 10, 31, 32, 33, and 113 each coordinate NADPH. Lys114 serves as a coordination point for 1-deoxy-D-xylulose 5-phosphate. Residue Glu115 participates in NADPH binding. Asp133 is a binding site for Mn(2+). 4 residues coordinate 1-deoxy-D-xylulose 5-phosphate: Ser134, Glu135, Ser158, and His181. Position 135 (Glu135) interacts with Mn(2+). Gly187 provides a ligand contact to NADPH. 4 residues coordinate 1-deoxy-D-xylulose 5-phosphate: Ser194, Asn199, Lys200, and Glu203. Glu203 provides a ligand contact to Mn(2+).

It belongs to the DXR family. Requires Mg(2+) as cofactor. Mn(2+) is required as a cofactor.

The enzyme catalyses 2-C-methyl-D-erythritol 4-phosphate + NADP(+) = 1-deoxy-D-xylulose 5-phosphate + NADPH + H(+). It participates in isoprenoid biosynthesis; isopentenyl diphosphate biosynthesis via DXP pathway; isopentenyl diphosphate from 1-deoxy-D-xylulose 5-phosphate: step 1/6. Catalyzes the NADPH-dependent rearrangement and reduction of 1-deoxy-D-xylulose-5-phosphate (DXP) to 2-C-methyl-D-erythritol 4-phosphate (MEP). The protein is 1-deoxy-D-xylulose 5-phosphate reductoisomerase of Helicobacter pylori (strain HPAG1).